A 410-amino-acid chain; its full sequence is Schlafen-like protein 1 (410 aa).

Disordered regions lie at residues 1–20 (MSLRKRSAQTQMWESPVMSQ) and 141–199 (LHHR…SGVR). A compositionally biased stretch (polar residues) spans 8–20 (AQTQMWESPVMSQ). The span at 154-173 (SHSPGPSPGPSPGLRHPPLP) shows a compositional bias: pro residues. Residue 264-271 (GVEDSGLV) participates in ATP binding. Positions 370 to 401 (QKWAMELGKLEEKVKVLTLEKEQLQQQLRQRQ) form a coiled coil.

It belongs to the Schlafen family. Subgroup I subfamily.

The protein is Schlafen-like protein 1 (Slfnl1) of Mus musculus (Mouse).